Consider the following 106-residue polypeptide: Large ribosomal subunit protein uL24 (106 aa).

The disordered stretch occupies residues M1 to R20. Residues K8–R20 show a composition bias toward basic and acidic residues.

This sequence belongs to the universal ribosomal protein uL24 family. As to quaternary structure, part of the 50S ribosomal subunit.

In terms of biological role, one of two assembly initiator proteins, it binds directly to the 5'-end of the 23S rRNA, where it nucleates assembly of the 50S subunit. One of the proteins that surrounds the polypeptide exit tunnel on the outside of the subunit. This is Large ribosomal subunit protein uL24 from Methylacidiphilum infernorum (isolate V4) (Methylokorus infernorum (strain V4)).